Consider the following 1940-residue polypeptide: Rho GTPase-activating protein 32 (1940 aa).

Positions 154–248 (SKELVFLVQI…LTWMEIDNKG (95 aa)) constitute a PX; atypical domain. The SH3 domain occupies 262–324 (PAIAAAHVIK…PSECVELIND (63 aa)). The Rho-GAP domain maps to 375 to 570 (CDLGEHLLNS…FILNHVEVLF (196 aa)). Disordered regions lie at residues 646-746 (FPSE…LSAS), 1035-1163 (RANQ…FSVT), 1219-1264 (FTTG…PPVR), 1430-1454 (KHPR…YTED), and 1675-1786 (RSRS…HSSA). Residues 1047 to 1061 (PQGASASESPQELSH) show a composition bias toward polar residues. 2 stretches are compositionally biased toward low complexity: residues 1081-1094 (LALA…QASA) and 1145-1163 (SRKT…FSVT). A compositionally biased stretch (basic and acidic residues) spans 1691 to 1707 (ETKDVRYPGRTEGDERT). The segment covering 1725–1734 (PQKQSGSSRS) has biased composition (polar residues). Basic and acidic residues predominate over residues 1736 to 1755 (MQHDISTEQHSQDTLHRQPS).

This sequence belongs to the PX domain-containing GAP family.

It localises to the cytoplasm. It is found in the membrane. The protein localises to the cell membrane. Its function is as follows. GTPase-activating protein (GAP) promoting GTP hydrolysis on RHOA, CDC42 and RAC1 small GTPases. The sequence is that of Rho GTPase-activating protein 32 (arhgap32) from Xenopus laevis (African clawed frog).